Reading from the N-terminus, the 80-residue chain is uncharacterized protein (80 aa).

This is an uncharacterized protein from Homo sapiens (Human).